The following is a 462-amino-acid chain: 3-oxoacyl-[acyl-carrier-protein] synthase I, chloroplastic (462 aa).

Residues 1–35 constitute a chloroplast transit peptide; sequence MHAHAAHALGLRVPPPAFPRRRARPRRRPAAAVLA. Residues 1 to 45 form a disordered region; the sequence is MHAHAAHALGLRVPPPAFPRRRARPRRRPAAAVLATSAAPQRETD. Residues 19–29 show a composition bias toward basic residues; that stretch reads PRRRARPRRRP. Positions 30 to 39 are enriched in low complexity; that stretch reads AAAVLATSAA. The 413-residue stretch at 47 to 459 folds into the Ketosynthase family 3 (KS3) domain; sequence RKRVVITGMG…GHNSVVVFAP (413 aa). Active-site for beta-ketoacyl synthase activity residues include cysteine 213, histidine 353, and histidine 389.

It belongs to the thiolase-like superfamily. Beta-ketoacyl-ACP synthases family. In terms of assembly, homodimer.

It localises to the plastid. The protein resides in the chloroplast. It catalyses the reaction a fatty acyl-[ACP] + malonyl-[ACP] + H(+) = a 3-oxoacyl-[ACP] + holo-[ACP] + CO2. Catalyzes the condensation reaction of fatty acid synthesis by the addition to an acyl acceptor of two carbons from malonyl-ACP. Specific for elongation from C-10 to unsaturated C-16 and C-18 fatty acids. The chain is 3-oxoacyl-[acyl-carrier-protein] synthase I, chloroplastic (KAS12) from Hordeum vulgare (Barley).